Here is a 341-residue protein sequence, read N- to C-terminus: S-adenosylmethionine:tRNA ribosyltransferase-isomerase (341 aa).

It belongs to the QueA family. As to quaternary structure, monomer.

Its subcellular location is the cytoplasm. It carries out the reaction 7-aminomethyl-7-carbaguanosine(34) in tRNA + S-adenosyl-L-methionine = epoxyqueuosine(34) in tRNA + adenine + L-methionine + 2 H(+). It participates in tRNA modification; tRNA-queuosine biosynthesis. Functionally, transfers and isomerizes the ribose moiety from AdoMet to the 7-aminomethyl group of 7-deazaguanine (preQ1-tRNA) to give epoxyqueuosine (oQ-tRNA). The polypeptide is S-adenosylmethionine:tRNA ribosyltransferase-isomerase (Clostridium botulinum (strain ATCC 19397 / Type A)).